The primary structure comprises 727 residues: Translation initiation factor IF-2, mitochondrial (727 aa).

A mitochondrion-targeting transit peptide spans 1 to 29 (MNQKLLKLENLLRFHTICRQVHSPSQRRL). The region spanning 178–346 (PRSPVVTVMG…ATIALAEILE (169 aa)) is the tr-type G domain. Residues 187-194 (GHVDHGKT) form a G1 region. Residue 187–194 (GHVDHGKT) participates in GTP binding. Residues 212–216 (GITQH) form a G2 region. Residues 234-237 (DTPG) and 288-291 (NKCD) each bind GTP. The segment at 234–237 (DTPG) is G3. The tract at residues 288–291 (NKCD) is G4. Positions 324 to 326 (SAL) are G5. Thr-688 bears the Phosphothreonine mark.

This sequence belongs to the TRAFAC class translation factor GTPase superfamily. Classic translation factor GTPase family. IF-2 subfamily. As to quaternary structure, monomer.

It localises to the mitochondrion. In terms of biological role, one of the essential components for the initiation of protein synthesis. Protects formylmethionyl-tRNA from spontaneous hydrolysis and promotes its binding to the 30S ribosomal subunits. Also involved in the hydrolysis of GTP during the formation of the 70S ribosomal complex. The protein is Translation initiation factor IF-2, mitochondrial (Mtif2) of Mus musculus (Mouse).